A 70-amino-acid chain; its full sequence is Small ribosomal subunit protein bS21 (70 aa).

The protein belongs to the bacterial ribosomal protein bS21 family.

The protein is Small ribosomal subunit protein bS21 of Bordetella avium (strain 197N).